We begin with the raw amino-acid sequence, 216 residues long: Peptide methionine sulfoxide reductase MsrA (216 aa).

Cys54 is a catalytic residue.

The protein belongs to the MsrA Met sulfoxide reductase family.

It catalyses the reaction L-methionyl-[protein] + [thioredoxin]-disulfide + H2O = L-methionyl-(S)-S-oxide-[protein] + [thioredoxin]-dithiol. It carries out the reaction [thioredoxin]-disulfide + L-methionine + H2O = L-methionine (S)-S-oxide + [thioredoxin]-dithiol. Functionally, has an important function as a repair enzyme for proteins that have been inactivated by oxidation. Catalyzes the reversible oxidation-reduction of methionine sulfoxide in proteins to methionine. The polypeptide is Peptide methionine sulfoxide reductase MsrA (Xanthomonas campestris pv. phaseoli).